An 88-amino-acid polypeptide reads, in one-letter code: Small ribosomal subunit protein bS20 (88 aa).

This sequence belongs to the bacterial ribosomal protein bS20 family.

Functionally, binds directly to 16S ribosomal RNA. The protein is Small ribosomal subunit protein bS20 of Nitrobacter winogradskyi (strain ATCC 25391 / DSM 10237 / CIP 104748 / NCIMB 11846 / Nb-255).